The chain runs to 907 residues: DNA (cytosine-5)-methyltransferase CMT3 (907 aa).

The segment covering 1–15 has biased composition (low complexity); it reads MAPSSPSSAAAPTRT. The tract at residues 1-154 is disordered; it reads MAPSSPSSAA…RNAATRRPDE (154 aa). The span at 30–63 shows a compositional bias: basic and acidic residues; sequence ATDEPSTKRTRRPKAETKPRKKKDEVKEEEKPPM. The segment covering 64–89 has biased composition (acidic residues); sequence EDDACGEEPDAEEMALGEEAEAEEAE. 2 stretches are compositionally biased toward basic and acidic residues: residues 115–124 and 131–140; these read HGSDGDHDPE and PAKEARDKWP. Positions 172–297 constitute a BAH domain; sequence TLYCLHDDVY…VAYSTFANIP (126 aa). The interval 303-323 is disordered; that stretch reads SGSDTASDISSDDVDSSKGKV. The SAM-dependent MTase C5-type domain maps to 335–868; sequence ATLLDLYSGC…YSLGLAYQRE (534 aa). One can recognise a Chromo domain in the interval 437 to 500; the sequence is FVVEKLAGIC…EGYRRKILPL (64 aa). Residue Cys513 is part of the active site.

This sequence belongs to the class I-like SAM-binding methyltransferase superfamily. C5-methyltransferase family.

The protein localises to the nucleus. It carries out the reaction a 2'-deoxycytidine in DNA + S-adenosyl-L-methionine = a 5-methyl-2'-deoxycytidine in DNA + S-adenosyl-L-homocysteine + H(+). Involved in CpXpG DNA methylation. Plays a critical role in the maintenance of CpXpG DNA methylation and suppression of a wide spectrum of transposable element (TE) activities. Required for proper plant development in reproductive stage. The polypeptide is DNA (cytosine-5)-methyltransferase CMT3 (Oryza sativa subsp. japonica (Rice)).